A 619-amino-acid polypeptide reads, in one-letter code: CREB-regulated transcription coactivator 3 (619 aa).

The interval 1-103 (MAASPGSGSA…LVERPSRNRF (103 aa)) is required for interaction with HTLV-1 TAX. Phosphoserine occurs at positions 4 and 62. The disordered stretch occupies residues 103 to 150 (FHPLHRRSGDKPGRQFDGSAFGANYSSQPLDESWPRQQPPWKDEKHPG). Residue Thr160 is modified to Phosphothreonine. Phosphoserine; by SIK2 is present on Ser162. The span at 165–175 (ALHTSALSTKP) shows a compositional bias: polar residues. The segment at 165 to 185 (ALHTSALSTKPQDPYGGGGQS) is disordered. Lys232 participates in a covalent cross-link: Glycyl lysine isopeptide (Lys-Gly) (interchain with G-Cter in SUMO2). Ser273, Ser329, Ser332, Ser370, Ser391, Ser396, Ser410, and Ser443 each carry phosphoserine. Positions 375–431 (STTNLSGPSRRRQPPVSPLTLSPGPEAHQGFSRQLSSTSPLAPYPTSQMVSSDRSQL) are disordered. Residues 380–401 (SGPSRRRQPPVSPLTLSPGPEA) are required for interaction with PPP2CA and PPP2R1A. Over residues 405 to 431 (FSRQLSSTSPLAPYPTSQMVSSDRSQL) the composition is skewed to polar residues.

This sequence belongs to the TORC family. As to quaternary structure, binding, as a tetramer, through its N-terminal region, with the bZIP domain of CREB1 enhances recruitment of TAF4 to the promoter. 'Arg-314' in the bZIP domain of CREB1 is essential for this interaction. Interacts (when phosphorylated at Ser-162 and Se-273) with 14-3-3 proteins. Interacts with YWHAE. Interacts (when phosphorylated at Ser-391) with phosphatase PP2A catalytic subunit PPP2CA and regulatory subunits PPP2R1A and PPP2R2A. Interacts, via the N-terminal with the ankyrin repeats of BCL3, to form a complex with CREB1 on CRE and TxRE responsive elements and represses HTLV-1 LTR-mediated transcription. (Microbial infection) Interacts with HTLV-1 protein Tax; this interaction enhances tax transcriptional activity. In terms of processing, phosphorylation/dephosphorylation states of Ser-273 are required for regulating transduction of CREB activity. CRTCs/TORCs are inactive when phosphorylated, and active when dephosphorylated at this site. May be phosphorylated at Ser-391 by MAPK3/ERK1 and/or MAPK1/ERK2 or by some cyclin-dependent kinases such as CDK1,CDK2 or CDK5. Following adenylyl cyclase activation, dephosphorylated at Ser-162 and Ser-273 resulting in its dissociation from 14-3-3 proteins probably promoting CRTC3 translocation into the nucleus. As to expression, predominantly expressed in B and T lymphocytes. Highest levels in lung. Also expressed in brain, colon, heart, kidney, ovary, and prostate. Weak expression in liver, pancreas, muscle, small intestine, spleen and stomach.

It localises to the nucleus. It is found in the cytoplasm. Transcriptional coactivator for CREB1 which activates transcription through both consensus and variant cAMP response element (CRE) sites. Acts as a coactivator, in the SIK/TORC signaling pathway, being active when dephosphorylated and acts independently of CREB1 'Ser-133' phosphorylation. Enhances the interaction of CREB1 with TAF4. Regulates the expression of specific CREB-activated genes such as the steroidogenic gene, StAR. Potent coactivator of PPARGC1A and inducer of mitochondrial biogenesis in muscle cells. Also coactivator for TAX activation of the human T-cell leukemia virus type 1 (HTLV-1) long terminal repeats (LTR). The sequence is that of CREB-regulated transcription coactivator 3 (CRTC3) from Homo sapiens (Human).